The sequence spans 198 residues: Protein GrpE (198 aa).

This sequence belongs to the GrpE family. Homodimer.

It localises to the cytoplasm. In terms of biological role, participates actively in the response to hyperosmotic and heat shock by preventing the aggregation of stress-denatured proteins, in association with DnaK and GrpE. It is the nucleotide exchange factor for DnaK and may function as a thermosensor. Unfolded proteins bind initially to DnaJ; upon interaction with the DnaJ-bound protein, DnaK hydrolyzes its bound ATP, resulting in the formation of a stable complex. GrpE releases ADP from DnaK; ATP binding to DnaK triggers the release of the substrate protein, thus completing the reaction cycle. Several rounds of ATP-dependent interactions between DnaJ, DnaK and GrpE are required for fully efficient folding. This chain is Protein GrpE, found in Baumannia cicadellinicola subsp. Homalodisca coagulata.